The chain runs to 156 residues: Small ribosomal subunit protein uS7 (156 aa).

Belongs to the universal ribosomal protein uS7 family. As to quaternary structure, part of the 30S ribosomal subunit. Contacts proteins S9 and S11.

In terms of biological role, one of the primary rRNA binding proteins, it binds directly to 16S rRNA where it nucleates assembly of the head domain of the 30S subunit. Is located at the subunit interface close to the decoding center, probably blocks exit of the E-site tRNA. The chain is Small ribosomal subunit protein uS7 from Ligilactobacillus salivarius (strain UCC118) (Lactobacillus salivarius).